The primary structure comprises 237 residues: N-(5'-phosphoribosyl)anthranilate isomerase (237 aa).

It belongs to the TrpF family.

The catalysed reaction is N-(5-phospho-beta-D-ribosyl)anthranilate = 1-(2-carboxyphenylamino)-1-deoxy-D-ribulose 5-phosphate. The protein operates within amino-acid biosynthesis; L-tryptophan biosynthesis; L-tryptophan from chorismate: step 3/5. This Desulfitobacterium hafniense (strain Y51) protein is N-(5'-phosphoribosyl)anthranilate isomerase.